The sequence spans 30 residues: 2-enoate reductase (30 aa).

Dodecamer; tetramer of trimers. The cofactor is iron-sulfur cluster. FAD serves as cofactor. Requires FMN as cofactor.

It carries out the reaction butanoate + NAD(+) = (2E)-2-butenoate + NADH + H(+). Its function is as follows. Involved in fermentation of amino acids (Stickland reaction) such as leucine, isoleucine, valine and phenylalanine. The protein is 2-enoate reductase of Clostridium tyrobutyricum.